Reading from the N-terminus, the 940-residue chain is UvrABC system protein A (940 aa).

31–38 (GLSGSGKS) is an ATP binding site. A C4-type zinc finger spans residues 252–279 (CPHCGYSMQELEPRLFSFNNPAGACGTC). 2 consecutive ABC transporter domains span residues 309–586 (WDQK…PDSL) and 606–936 (RDKN…RFLK). Position 639 to 646 (639 to 646 (GVSGSGKS)) interacts with ATP. The C4-type zinc finger occupies 739–765 (CEACQGDGVIKVEMHFLPDVYVPCDVC).

This sequence belongs to the ABC transporter superfamily. UvrA family. As to quaternary structure, forms a heterotetramer with UvrB during the search for lesions.

The protein localises to the cytoplasm. Its function is as follows. The UvrABC repair system catalyzes the recognition and processing of DNA lesions. UvrA is an ATPase and a DNA-binding protein. A damage recognition complex composed of 2 UvrA and 2 UvrB subunits scans DNA for abnormalities. When the presence of a lesion has been verified by UvrB, the UvrA molecules dissociate. This is UvrABC system protein A from Vibrio vulnificus (strain YJ016).